The primary structure comprises 85 residues: Large ribosomal subunit protein bL27 (85 aa).

The tract at residues 1-20 is disordered; that stretch reads MAHKKAGGSTRNGRDSESKR.

Belongs to the bacterial ribosomal protein bL27 family.

The sequence is that of Large ribosomal subunit protein bL27 from Yersinia enterocolitica serotype O:8 / biotype 1B (strain NCTC 13174 / 8081).